The primary structure comprises 357 residues: UDP-N-acetylglucosamine 2-epimerase homolog (357 aa).

It belongs to the UDP-N-acetylglucosamine 2-epimerase family.

The chain is UDP-N-acetylglucosamine 2-epimerase homolog from Methanococcus maripaludis (strain DSM 14266 / JCM 13030 / NBRC 101832 / S2 / LL).